Here is a 127-residue protein sequence, read N- to C-terminus: Anti-adapter protein IraD (127 aa).

This sequence belongs to the GpW/Gp25 family. IraD subfamily. In terms of assembly, interacts with RssB.

It localises to the cytoplasm. In terms of biological role, inhibits RpoS proteolysis by regulating RssB activity, thereby increasing the stability of the sigma stress factor RpoS during oxidative stress. Its effect on RpoS stability is due to its interaction with RssB, which probably blocks the interaction of RssB with RpoS, and the consequent delivery of the RssB-RpoS complex to the ClpXP protein degradation pathway. This chain is Anti-adapter protein IraD, found in Escherichia coli O6:K15:H31 (strain 536 / UPEC).